The chain runs to 264 residues: MKSYLALLSHVLNQGIDRTDRTGVGTRSIFGYQMRFDLQAGFPLLTTKKLHLRSIIYELLWFLKGDTNIAWLKEHGVSIWDEWADKQGNLGPVYGYQWRSWPAPDGRHIDQIDNLLRMIKEKPDSRRLIVSAWNPALIEEMALPPCHCLFQFYIDEGKLSCQLYQRSADIFLGVPFNIASYALLTMMIAQVSGLKVGDFIHTFGDAHLYSNHFEQAQYQLSRIPNALPCMRINPAVTDLFSFKFEDFELLNYEAHPHIKAPVAI.

Residue Arg-21 coordinates dUMP. Residue His-51 participates in (6R)-5,10-methylene-5,6,7,8-tetrahydrofolate binding. 126–127 provides a ligand contact to dUMP; that stretch reads RR. Catalysis depends on Cys-146, which acts as the Nucleophile. DUMP contacts are provided by residues 166-169, Asn-177, and 207-209; these read RSAD and HLY. A (6R)-5,10-methylene-5,6,7,8-tetrahydrofolate-binding site is contributed by Asp-169. Ala-263 contacts (6R)-5,10-methylene-5,6,7,8-tetrahydrofolate.

This sequence belongs to the thymidylate synthase family. Bacterial-type ThyA subfamily. Homodimer.

Its subcellular location is the cytoplasm. The catalysed reaction is dUMP + (6R)-5,10-methylene-5,6,7,8-tetrahydrofolate = 7,8-dihydrofolate + dTMP. It participates in pyrimidine metabolism; dTTP biosynthesis. Its function is as follows. Catalyzes the reductive methylation of 2'-deoxyuridine-5'-monophosphate (dUMP) to 2'-deoxythymidine-5'-monophosphate (dTMP) while utilizing 5,10-methylenetetrahydrofolate (mTHF) as the methyl donor and reductant in the reaction, yielding dihydrofolate (DHF) as a by-product. This enzymatic reaction provides an intracellular de novo source of dTMP, an essential precursor for DNA biosynthesis. The chain is Thymidylate synthase from Bartonella tribocorum (strain CIP 105476 / IBS 506).